We begin with the raw amino-acid sequence, 920 residues long: 2-oxoadipate dehydrogenase complex component E1 (920 aa).

The disordered stretch occupies residues 299–322 (QGKTRGRQQVKQDGDYSTDPHSRP). The span at 308-322 (VKQDGDYSTDPHSRP) shows a compositional bias: basic and acidic residues.

The protein belongs to the alpha-ketoglutarate dehydrogenase family. As to quaternary structure, the 2-oxoadipate dehydrogenase complex is composed of OADH (2-oxoadipate dehydrogenase; E1a), DLST (dihydrolipoamide succinyltransferase; E2) and DLD (dihydrolipoamide dehydrogenase; E3). E1a functional unit is a dimer. Thiamine diphosphate serves as cofactor.

It localises to the mitochondrion. It carries out the reaction N(6)-[(R)-lipoyl]-L-lysyl-[protein] + 2-oxoadipate + H(+) = N(6)-[(R)-S(8)-glutaryldihydrolipoyl]-L-lysyl-[protein] + CO2. The protein operates within amino-acid degradation. Functionally, 2-oxoadipate dehydrogenase (E1a) component of the 2-oxoadipate dehydrogenase complex (OADHC). Participates in the first step, rate limiting for the overall conversion of 2-oxoadipate (alpha-ketoadipate) to glutaryl-CoA and CO(2) catalyzed by the whole OADHC. Catalyzes the irreversible decarboxylation of 2-oxoadipate via the thiamine diphosphate (ThDP) cofactor and subsequent transfer of the decarboxylated acyl intermediate on an oxidized dihydrolipoyl group that is covalently amidated to the E2 enzyme (dihydrolipoyllysine-residue succinyltransferase or DLST). Can catalyze the decarboxylation of 2-oxoglutarate in vitro, but at a much lower rate than 2-oxoadipate. Responsible for the last step of L-lysine, L-hydroxylysine and L-tryptophan catabolism with the common product being 2-oxoadipate. This is 2-oxoadipate dehydrogenase complex component E1 (dhtkd1) from Danio rerio (Zebrafish).